A 60-amino-acid chain; its full sequence is Large ribosomal subunit protein uL30 (60 aa).

It belongs to the universal ribosomal protein uL30 family. As to quaternary structure, part of the 50S ribosomal subunit.

This chain is Large ribosomal subunit protein uL30, found in Sphingopyxis alaskensis (strain DSM 13593 / LMG 18877 / RB2256) (Sphingomonas alaskensis).